The primary structure comprises 843 residues: Eisosome protein 1 (843 aa).

An N-acetylserine modification is found at serine 2. Serine 2 carries the phosphoserine modification. Residues 13 to 44 form a disordered region; the sequence is HNIGKTSGGGSRTSSITSSKKSLKHGSKSLRK. A compositionally biased stretch (basic residues) spans 33–44; the sequence is KSLKHGSKSLRK. 2 positions are modified to phosphoserine: serine 88 and serine 130. The interval 120–174 is disordered; that stretch reads KMGPKVVRNNSITSATSKTSKESQTKRKSKESPGAAASKAYSMTMETTSLSSQTN. Composition is skewed to polar residues over residues 127-137 and 163-174; these read RNNSITSATSK and TMETTSLSSQTN. 4 positions are modified to phosphoserine: serine 182, serine 401, serine 584, and serine 710. The tract at residues 717–843 is disordered; sequence DLPTQLEKIE…QDAISNQEKK (127 aa). Threonine 720 bears the Phosphothreonine mark. The span at 752-764 shows a compositional bias: low complexity; the sequence is STAAKEATETSSA. Serine 763 and serine 775 each carry phosphoserine. Basic and acidic residues predominate over residues 781–797; it reads SGKEDANDCKSAEHSKE. Residues 798-810 show a composition bias toward polar residues; that stretch reads ISVSQKAGNNKSL. Phosphoserine is present on residues serine 816, serine 828, serine 829, and serine 838.

Belongs to the EIS1 family.

It localises to the cytoplasmic granule. It is found in the cell membrane. Its function is as follows. Required for normal formation of eisosomes, large cytoplasmic protein assemblies that localize to specialized domains on plasma membrane and mark the site of endocytosis. In Saccharomyces cerevisiae (strain Lalvin EC1118 / Prise de mousse) (Baker's yeast), this protein is Eisosome protein 1 (EIS1).